Reading from the N-terminus, the 407-residue chain is Phosphopentomutase (407 aa).

6 residues coordinate Mn(2+): Asp10, Asp306, His311, Asp347, His348, and His359.

This sequence belongs to the phosphopentomutase family. It depends on Mn(2+) as a cofactor.

It localises to the cytoplasm. The catalysed reaction is 2-deoxy-alpha-D-ribose 1-phosphate = 2-deoxy-D-ribose 5-phosphate. The enzyme catalyses alpha-D-ribose 1-phosphate = D-ribose 5-phosphate. The protein operates within carbohydrate degradation; 2-deoxy-D-ribose 1-phosphate degradation; D-glyceraldehyde 3-phosphate and acetaldehyde from 2-deoxy-alpha-D-ribose 1-phosphate: step 1/2. Its function is as follows. Isomerase that catalyzes the conversion of deoxy-ribose 1-phosphate (dRib-1-P) and ribose 1-phosphate (Rib-1-P) to deoxy-ribose 5-phosphate (dRib-5-P) and ribose 5-phosphate (Rib-5-P), respectively. The polypeptide is Phosphopentomutase (Edwardsiella ictaluri (strain 93-146)).